Here is a 467-residue protein sequence, read N- to C-terminus: ATP synthase subunit beta (467 aa).

154-161 lines the ATP pocket; the sequence is GGAGVGKT.

The protein belongs to the ATPase alpha/beta chains family. As to quaternary structure, F-type ATPases have 2 components, CF(1) - the catalytic core - and CF(0) - the membrane proton channel. CF(1) has five subunits: alpha(3), beta(3), gamma(1), delta(1), epsilon(1). CF(0) has three main subunits: a(1), b(2) and c(9-12). The alpha and beta chains form an alternating ring which encloses part of the gamma chain. CF(1) is attached to CF(0) by a central stalk formed by the gamma and epsilon chains, while a peripheral stalk is formed by the delta and b chains.

Its subcellular location is the cell inner membrane. The catalysed reaction is ATP + H2O + 4 H(+)(in) = ADP + phosphate + 5 H(+)(out). In terms of biological role, produces ATP from ADP in the presence of a proton gradient across the membrane. The catalytic sites are hosted primarily by the beta subunits. The chain is ATP synthase subunit beta from Petrotoga mobilis (strain DSM 10674 / SJ95).